The following is a 158-amino-acid chain: Transcription elongation factor GreA (158 aa).

Residues 2–70 are a coiled coil; it reads ENQKQYPMTQ…IEQDIQRIEH (69 aa).

This sequence belongs to the GreA/GreB family.

Its function is as follows. Necessary for efficient RNA polymerase transcription elongation past template-encoded arresting sites. The arresting sites in DNA have the property of trapping a certain fraction of elongating RNA polymerases that pass through, resulting in locked ternary complexes. Cleavage of the nascent transcript by cleavage factors such as GreA or GreB allows the resumption of elongation from the new 3'terminus. GreA releases sequences of 2 to 3 nucleotides. This is Transcription elongation factor GreA from Staphylococcus epidermidis (strain ATCC 35984 / DSM 28319 / BCRC 17069 / CCUG 31568 / BM 3577 / RP62A).